Here is a 21-residue protein sequence, read N- to C-terminus: Ocellatin-2 (21 aa).

Ile-21 bears the Isoleucine amide mark.

Expressed by the skin dorsal glands.

The protein resides in the secreted. In terms of biological role, has hemolytic activity against human erythrocytes and antibacterial activity against the Gram-negative bacterium E.coli. This is Ocellatin-2 from Leptodactylus ocellatus (Argus frog).